The sequence spans 512 residues: Maturase K (512 aa).

It belongs to the intron maturase 2 family. MatK subfamily.

It localises to the plastid. It is found in the chloroplast. Functionally, usually encoded in the trnK tRNA gene intron. Probably assists in splicing its own and other chloroplast group II introns. The sequence is that of Maturase K from Soldanella alpina (Alpine snowbell).